The primary structure comprises 298 residues: Keratin-associated protein 10-11 (298 aa).

Repeat copies occupy residues 26–30, 36–40, 57–61, 79–83, 89–93, 99–103, 104–108, 109–113, 114–118, 119–123, 126–130, 136–140, 146–150, 151–155, 156–160, 168–172, 178–182, 188–192, 193–197, 203–207, 225–229, 230–234, 249–253, 256–260, and 267–271. The 25 X 5 AA repeats of C-C-X(3) stretch occupies residues 26-271; sequence CCEPPCSAPS…SCQSSCCRPA (246 aa).

This sequence belongs to the KRTAP type 10 family. Interacts with hair keratins. Restricted to a narrow region of the hair fiber cuticle, lying approximately 20 cell layers above the apex of the dermal papilla of the hair root; not detected in any other tissues.

Its function is as follows. In the hair cortex, hair keratin intermediate filaments are embedded in an interfilamentous matrix, consisting of hair keratin-associated proteins (KRTAP), which are essential for the formation of a rigid and resistant hair shaft through their extensive disulfide bond cross-linking with abundant cysteine residues of hair keratins. The matrix proteins include the high-sulfur and high-glycine-tyrosine keratins. The polypeptide is Keratin-associated protein 10-11 (KRTAP10-11) (Homo sapiens (Human)).